A 70-amino-acid polypeptide reads, in one-letter code: Guanine nucleotide-binding protein G(I)/G(S)/G(O) subunit gamma-8 (70 aa).

Position 67 is a cysteine methyl ester (cysteine 67). Residue cysteine 67 is the site of S-geranylgeranyl cysteine attachment. Positions 68 to 70 are cleaved as a propeptide — removed in mature form; sequence VLL.

It belongs to the G protein gamma family. In terms of assembly, g proteins are composed of 3 units, alpha, beta and gamma.

It localises to the cell membrane. Functionally, guanine nucleotide-binding proteins (G proteins) are involved as a modulator or transducer in various transmembrane signaling systems. The beta and gamma chains are required for the GTPase activity, for replacement of GDP by GTP, and for G protein-effector interaction. In Homo sapiens (Human), this protein is Guanine nucleotide-binding protein G(I)/G(S)/G(O) subunit gamma-8 (GNG8).